A 467-amino-acid polypeptide reads, in one-letter code: Cysteine--tRNA ligase (467 aa).

Zn(2+) is bound at residue Cys27. The 'HIGH' region signature appears at 29–39; that stretch reads PTVYNYIHIGN. Cys207, His232, and Glu236 together coordinate Zn(2+). A 'KMSKS' region motif is present at residues 264-268; the sequence is KMSKS. Lys267 contributes to the ATP binding site.

The protein belongs to the class-I aminoacyl-tRNA synthetase family. As to quaternary structure, monomer. It depends on Zn(2+) as a cofactor.

The protein localises to the cytoplasm. The catalysed reaction is tRNA(Cys) + L-cysteine + ATP = L-cysteinyl-tRNA(Cys) + AMP + diphosphate. The sequence is that of Cysteine--tRNA ligase from Caldanaerobacter subterraneus subsp. tengcongensis (strain DSM 15242 / JCM 11007 / NBRC 100824 / MB4) (Thermoanaerobacter tengcongensis).